We begin with the raw amino-acid sequence, 231 residues long: Pathogenesis-related thaumatin-like protein 3.7 (231 aa).

Residues 1-27 (MATVSDLALLLVAGLVAISLHMQEAGA) form the signal peptide. 8 cysteine pairs are disulfide-bonded: C36-C230, C77-C87, C92-C98, C143-C218, C148-C201, C156-C166, C170-C179, and C180-C188.

The protein belongs to the thaumatin family.

May be involved in disease resistance. In Cryptomeria japonica (Japanese cedar), this protein is Pathogenesis-related thaumatin-like protein 3.7.